We begin with the raw amino-acid sequence, 671 residues long: MEPIEQQLTELRTTLRHHEYLYHVMDAPEIPDAEYDRLMRELRELEAQRPDLITPDSPTQRVGAAPLTAFNQIRHEVPMLSLDNVFDEESFLAFNKRVQDRLKSTENVIWCCELKLDGLAVSILYENGVLVSAATRGDGTTGEDITSNVRTIRAIPLKLHGDNIPARLEVRGEVFLPQAGFEKINEDARRTGGKVFANPRNAAAGSLRQLDPRITAKRPLTFFCYGVGILEGGELPDTHLGRLLQFKAWGLPVSDRVTLCDSPQAVLDFYRNVEKDRPTLGFDIDGVVIKVNSLALQEQLGFVARAPRWAVAFKFPAQEQMTFVRDVEFQVGRTGAITPVARLEPVQVAGVLVSNATLHNADEIERLGLRIGDKVVIRRAGDVIPQVVNVVLSERPEETRPIVFPTHCPVCGSDVERVEGEAVTRCTGGLICGAQRKESLKHFVSRRAMDVDGMGDKIIDQLVEREYVHTPADLFRLTAGKLTGLDRMGPKSAQNVVNALEKAKATTFARFLYALGIREVGEATAEGLAAYFGTLEALQAATIDELQKVPDVGIVVATHVFNFFAEESNRDVIVQLLAEGVHWPAPVVINVQEIDSPFAGKTVVLTGSLSQMSRDDAKARLVALGAKVAGSVSKKTDLVIAGEAAGSKLAKAQELGITVIDEAEMIRLLGA.

NAD(+)-binding positions include 32–36, 81–82, and E113; these read DAEYD and SL. K115 serves as the catalytic N6-AMP-lysine intermediate. Residues R136, E173, K290, and K314 each contribute to the NAD(+) site. 4 residues coordinate Zn(2+): C408, C411, C426, and C432. The 79-residue stretch at 593–671 folds into the BRCT domain; it reads EIDSPFAGKT…EAEMIRLLGA (79 aa).

The protein belongs to the NAD-dependent DNA ligase family. LigA subfamily. Requires Mg(2+) as cofactor. Mn(2+) is required as a cofactor.

The enzyme catalyses NAD(+) + (deoxyribonucleotide)n-3'-hydroxyl + 5'-phospho-(deoxyribonucleotide)m = (deoxyribonucleotide)n+m + AMP + beta-nicotinamide D-nucleotide.. In terms of biological role, DNA ligase that catalyzes the formation of phosphodiester linkages between 5'-phosphoryl and 3'-hydroxyl groups in double-stranded DNA using NAD as a coenzyme and as the energy source for the reaction. It is essential for DNA replication and repair of damaged DNA. This chain is DNA ligase, found in Salmonella choleraesuis (strain SC-B67).